A 379-amino-acid polypeptide reads, in one-letter code: tRNA-specific 2-thiouridylase MnmA (379 aa).

Residues 23–30 (AMSGGVDS) and Leu-49 contribute to the ATP site. The active-site Nucleophile is Cys-117. The cysteines at positions 117 and 214 are disulfide-linked. Gly-141 contacts ATP. An interaction with tRNA region spans residues 163-165 (RDQ). Cys-214 functions as the Cysteine persulfide intermediate in the catalytic mechanism.

It belongs to the MnmA/TRMU family.

The protein resides in the cytoplasm. The catalysed reaction is S-sulfanyl-L-cysteinyl-[protein] + uridine(34) in tRNA + AH2 + ATP = 2-thiouridine(34) in tRNA + L-cysteinyl-[protein] + A + AMP + diphosphate + H(+). Functionally, catalyzes the 2-thiolation of uridine at the wobble position (U34) of tRNA, leading to the formation of s(2)U34. The polypeptide is tRNA-specific 2-thiouridylase MnmA (Cereibacter sphaeroides (strain KD131 / KCTC 12085) (Rhodobacter sphaeroides)).